Reading from the N-terminus, the 297-residue chain is MKRPDYRTLQALDAVIRERGFERAAQKLCITQSAVSQRIKQLENMFGQPLLVRTVPPRPTEQGQKLLALLRQVELLEEEWLGDEQTGSTPLLLSLAVNADSLATWLLPALAPVLADSPIRLNLQVEDETRTQERLRRGEVVGAVSIQHQALPSCLVDKLGALDYLFVASRPFAERYFPNGVTRSSLLKAPAVAFDHLDDMHQAFLQQNFDLPPGSVPCHIVNSSEAFVQLARQGTTCCMIPHLQIEKELESGELINLTPGLLQRRMLYWHRFAPESRMMRKVTDALLEYGHKVLRQD.

Residues 4-60 form the HTH lysR-type domain; the sequence is PDYRTLQALDAVIRERGFERAAQKLCITQSAVSQRIKQLENMFGQPLLVRTVPPRPT. The segment at residues 21–40 is a DNA-binding region (H-T-H motif); sequence FERAAQKLCITQSAVSQRIK.

Belongs to the LysR transcriptional regulatory family. Homodimer.

Controls the transcription of genes involved in arginine and lysine metabolism. This chain is HTH-type transcriptional regulator ArgP, found in Salmonella dublin (strain CT_02021853).